The following is a 123-amino-acid chain: Holo-[acyl-carrier-protein] synthase (123 aa).

Mg(2+) contacts are provided by Asp8 and Glu55.

This sequence belongs to the P-Pant transferase superfamily. AcpS family. Mg(2+) is required as a cofactor.

The protein localises to the cytoplasm. The catalysed reaction is apo-[ACP] + CoA = holo-[ACP] + adenosine 3',5'-bisphosphate + H(+). Functionally, transfers the 4'-phosphopantetheine moiety from coenzyme A to a Ser of acyl-carrier-protein. The polypeptide is Holo-[acyl-carrier-protein] synthase (Solidesulfovibrio magneticus (strain ATCC 700980 / DSM 13731 / RS-1) (Desulfovibrio magneticus)).